The sequence spans 126 residues: Aspartate 1-decarboxylase (126 aa).

The active-site Schiff-base intermediate with substrate; via pyruvic acid is serine 25. Residue serine 25 is modified to Pyruvic acid (Ser). Threonine 57 is a substrate binding site. Tyrosine 58 (proton donor) is an active-site residue. Glycine 72 to alanine 74 serves as a coordination point for substrate.

Belongs to the PanD family. As to quaternary structure, heterooctamer of four alpha and four beta subunits. Pyruvate is required as a cofactor. Is synthesized initially as an inactive proenzyme, which is activated by self-cleavage at a specific serine bond to produce a beta-subunit with a hydroxyl group at its C-terminus and an alpha-subunit with a pyruvoyl group at its N-terminus.

The protein localises to the cytoplasm. It catalyses the reaction L-aspartate + H(+) = beta-alanine + CO2. It functions in the pathway cofactor biosynthesis; (R)-pantothenate biosynthesis; beta-alanine from L-aspartate: step 1/1. Its function is as follows. Catalyzes the pyruvoyl-dependent decarboxylation of aspartate to produce beta-alanine. The polypeptide is Aspartate 1-decarboxylase (Campylobacter jejuni subsp. jejuni serotype O:6 (strain 81116 / NCTC 11828)).